The chain runs to 646 residues: Serine/threonine-protein kinase sck2 (646 aa).

Disordered regions lie at residues 17–85 (VSTN…LPEV) and 143–176 (GRDI…IQRT). The span at 68 to 80 (SDQSTVGNRNSND) shows a compositional bias: polar residues. Residues 149–165 (SSRDSANVSRSSSMMSS) show a composition bias toward low complexity. Positions 266–527 (FVPLKLIGKG…VEEVMKHPFF (262 aa)) constitute a Protein kinase domain. ATP is bound by residues 272–280 (IGKGTFGQV) and K295. The Proton acceptor role is filled by D392. The AGC-kinase C-terminal domain occupies 528–605 (DGIDWKKLAA…IDASAMDEAF (78 aa)). Residues 609 to 646 (NSNDSASSISSQDDYSKDNSDMDLNRANDEVFMGQIDP) are disordered. Residues 610–621 (SNDSASSISSQD) show a composition bias toward low complexity. Residues 622-637 (DYSKDNSDMDLNRAND) are compositionally biased toward basic and acidic residues.

It belongs to the protein kinase superfamily. AGC Ser/Thr protein kinase family. PKC subfamily.

It carries out the reaction L-seryl-[protein] + ATP = O-phospho-L-seryl-[protein] + ADP + H(+). The catalysed reaction is L-threonyl-[protein] + ATP = O-phospho-L-threonyl-[protein] + ADP + H(+). Protein kinase that is part of growth control pathway which is at least partially redundant with the cAMP pathway. The protein is Serine/threonine-protein kinase sck2 (sck2) of Schizosaccharomyces pombe (strain 972 / ATCC 24843) (Fission yeast).